Reading from the N-terminus, the 353-residue chain is Holliday junction branch migration complex subunit RuvB (353 aa).

Residues 1 to 183 are large ATPase domain (RuvB-L); sequence MSGEGLVSAA…FGFTAHMDFY (183 aa). ATP contacts are provided by residues Leu22, Arg23, Gly64, Lys67, Thr68, Ser69, 130–132, Arg173, Tyr183, and Arg220; that span reads EDF. Thr68 contacts Mg(2+). The interval 184-254 is small ATPAse domain (RuvB-S); it reads DAAELALVLT…VARAALRIYD (71 aa). Residues 257–353 are head domain (RuvB-H); the sequence is ALGLDRLDRA…ALFGEDLPAS (97 aa). Positions 312 and 317 each coordinate DNA.

This sequence belongs to the RuvB family. As to quaternary structure, homohexamer. Forms an RuvA(8)-RuvB(12)-Holliday junction (HJ) complex. HJ DNA is sandwiched between 2 RuvA tetramers; dsDNA enters through RuvA and exits via RuvB. An RuvB hexamer assembles on each DNA strand where it exits the tetramer. Each RuvB hexamer is contacted by two RuvA subunits (via domain III) on 2 adjacent RuvB subunits; this complex drives branch migration. In the full resolvosome a probable DNA-RuvA(4)-RuvB(12)-RuvC(2) complex forms which resolves the HJ.

The protein localises to the cytoplasm. The catalysed reaction is ATP + H2O = ADP + phosphate + H(+). Its function is as follows. The RuvA-RuvB-RuvC complex processes Holliday junction (HJ) DNA during genetic recombination and DNA repair, while the RuvA-RuvB complex plays an important role in the rescue of blocked DNA replication forks via replication fork reversal (RFR). RuvA specifically binds to HJ cruciform DNA, conferring on it an open structure. The RuvB hexamer acts as an ATP-dependent pump, pulling dsDNA into and through the RuvAB complex. RuvB forms 2 homohexamers on either side of HJ DNA bound by 1 or 2 RuvA tetramers; 4 subunits per hexamer contact DNA at a time. Coordinated motions by a converter formed by DNA-disengaged RuvB subunits stimulates ATP hydrolysis and nucleotide exchange. Immobilization of the converter enables RuvB to convert the ATP-contained energy into a lever motion, pulling 2 nucleotides of DNA out of the RuvA tetramer per ATP hydrolyzed, thus driving DNA branch migration. The RuvB motors rotate together with the DNA substrate, which together with the progressing nucleotide cycle form the mechanistic basis for DNA recombination by continuous HJ branch migration. Branch migration allows RuvC to scan DNA until it finds its consensus sequence, where it cleaves and resolves cruciform DNA. In Parafrankia sp. (strain EAN1pec), this protein is Holliday junction branch migration complex subunit RuvB.